Consider the following 319-residue polypeptide: Nucleotide-binding protein Mvan_2698 (319 aa).

Positions 1–12 (MTEQGMHQELRE) are enriched in basic and acidic residues. Residues 1 to 26 (MTEQGMHQELREGAGTAGDEGGLEAA) are disordered. 43 to 50 (GLSGAGRG) serves as a coordination point for ATP. 94 to 97 (DVRS) lines the GTP pocket.

The protein belongs to the RapZ-like family.

In terms of biological role, displays ATPase and GTPase activities. This Mycolicibacterium vanbaalenii (strain DSM 7251 / JCM 13017 / BCRC 16820 / KCTC 9966 / NRRL B-24157 / PYR-1) (Mycobacterium vanbaalenii) protein is Nucleotide-binding protein Mvan_2698.